The chain runs to 147 residues: UPF0178 protein VS_2364 (147 aa).

Belongs to the UPF0178 family.

In Vibrio atlanticus (strain LGP32) (Vibrio splendidus (strain Mel32)), this protein is UPF0178 protein VS_2364.